Consider the following 501-residue polypeptide: Dipeptide and tripeptide permease A (501 aa).

Topologically, residues 1–34 (MSTANNNQPESISMNAFKQPKAFYLIFSIELWER) are cytoplasmic. The chain crosses the membrane as a helical span at residues 35 to 55 (FGYYGLQGIMAVYLVKMLGMS). Topologically, residues 56 to 59 (EADS) are periplasmic. Residues 60 to 80 (ITLFSSFSALVYGFVAIGGWL) traverse the membrane as a helical segment. Topologically, residues 81–89 (GDKVLGAKR) are cytoplasmic. The next 2 membrane-spanning stretches (helical) occupy residues 90–110 (VIVLGALTLAVGYSMIAYSGH) and 111–131 (EIFWVYLGMATIAVGNGLFKA). Residues 132–153 (NPSSLLSTCYSKDDPRLDGAFT) are Periplasmic-facing. A helical transmembrane segment spans residues 154 to 174 (MYYMSINIGSFFSMLATPWLA). The Cytoplasmic segment spans residues 175 to 178 (AKYG). A helical transmembrane segment spans residues 179–199 (WSVAFSLSVVGMLITLVNFWF). Over 200-220 (CRKWVKNQGSKPDFLPLQFKK) the chain is Periplasmic. Residues 221–241 (LLMVLVGIIALITLSNWLLHN) form a helical membrane-spanning segment. At 242-246 (QIIAR) the chain is on the cytoplasmic side. The chain crosses the membrane as a helical span at residues 247–267 (WALALVSLGIIFIFTKETLFL). The Periplasmic portion of the chain corresponds to 268 to 274 (QGIARRR). The helical transmembrane segment at 275–295 (MIVAFLLMLEAVIFFVLYSQM) threads the bilayer. The Cytoplasmic segment spans residues 296-320 (PTSLNFFAIHNVEHSIFGIGFEPEQ). A helical membrane pass occupies residues 321–341 (FQALNPFWIMLASPILAAIYN). The Periplasmic portion of the chain corresponds to 342 to 352 (KMGDRLPMPHK). Residues 353-373 (FAFGMMLCSAAFLVLPWGASF) form a helical membrane-spanning segment. Residues 374–383 (ANEHGIVSVN) are Cytoplasmic-facing. A helical transmembrane segment spans residues 384 to 404 (WLILSYALQSIGELMISGLGL). The Periplasmic segment spans residues 405–414 (AMVAQLVPQR). A helical transmembrane segment spans residues 415-435 (LMGFIMGSWFLTTAAAALIAG). At 436 to 460 (KVAALTAVPSDAITDAHASLAIYSH) the chain is on the cytoplasmic side. Residues 461–481 (VFMQIGIVTAIIAVLMMLTAP) traverse the membrane as a helical segment. At 482 to 501 (KLYRMTLAPSDHNDVKIMTQ) the chain is on the periplasmic side.

Belongs to the major facilitator superfamily. Proton-dependent oligopeptide transporter (POT/PTR) (TC 2.A.17) family. DtpA subfamily.

It localises to the cell inner membrane. In terms of biological role, proton-dependent permease that transports di- and tripeptides. This is Dipeptide and tripeptide permease A from Yersinia pestis.